Reading from the N-terminus, the 165-residue chain is Lipoprotein signal peptidase (165 aa).

A run of 4 helical transmembrane segments spans residues 7–27 (FFLLLGLIITVLLDQAIKYWI), 28–48 (THTMLLGTEIPLFPFISLYHV), 61–81 (FSHWGLIALTITIIVFLFWLW), and 87–107 (DKALSRFGIVLIIGGAIGNLI). Catalysis depends on residues Asp-117 and Asp-136. Residues 128-148 (SFAIFNLADTFITLGAISILI) form a helical membrane-spanning segment.

It belongs to the peptidase A8 family.

It localises to the cell inner membrane. The catalysed reaction is Release of signal peptides from bacterial membrane prolipoproteins. Hydrolyzes -Xaa-Yaa-Zaa-|-(S,diacylglyceryl)Cys-, in which Xaa is hydrophobic (preferably Leu), and Yaa (Ala or Ser) and Zaa (Gly or Ala) have small, neutral side chains.. Its pathway is protein modification; lipoprotein biosynthesis (signal peptide cleavage). This protein specifically catalyzes the removal of signal peptides from prolipoproteins. The chain is Lipoprotein signal peptidase from Bartonella bacilliformis (strain ATCC 35685 / KC583 / Herrer 020/F12,63).